The chain runs to 469 residues: MSFLTVSRLAPKLLNSKNATYFLVAARNASASSTNLKDVLADLIPKEQTRIKNFKQQYGKTNIGQITVDMVYGGMRGMKGLVYETSVLDPEEGIRFRGYSIPECQELLPKAPGGEEPLPEGLFWLLVTGQVPTEEQVNWVSKEWAKRAALPSHVVTMLDNFPTNLHPMSQFSAAITALNSESSFARAYSEGVHKTKYWEFIYEDSMDLIAKLPCIAAKIYRNLYREGSSIGAIDSNLDWSHNFTNMLGYSEPQFTELMRLYLTIHSDHEGGNVSAHTSHLVGSALSDPYLSFSAAMNGLAGPLHGLANQEVLVWLTALQKELGGEVSDERMRDYIWNTLKSGRVVPGYGHAVLRKTDPRYTCQREFALKHLPNDPMFKLVAQLYKIVPNVLLEQGKAKNPWPNVDAHSGVLLQYYGMTEMNYYTVLFGVSRALGVLAQLVWSRALGFPLERPKSMSTDGLMTLVGAKSG.

Residues 1-30 (MSFLTVSRLAPKLLNSKNATYFLVAARNAS) constitute a mitochondrion transit peptide. Active-site residues include H304 and H350. Position 359 (R359) interacts with oxaloacetate. D405 is an active-site residue. Residues R431 and R451 each coordinate oxaloacetate.

The protein belongs to the citrate synthase family. As to quaternary structure, homodimer.

The protein localises to the mitochondrion matrix. It carries out the reaction oxaloacetate + acetyl-CoA + H2O = citrate + CoA + H(+). Its pathway is carbohydrate metabolism; tricarboxylic acid cycle; isocitrate from oxaloacetate: step 1/2. Its function is as follows. Key enzyme of the Krebs tricarboxylic acid cycle which catalyzes the synthesis of citrate from acetyl coenzyme A and oxaloacetate. The polypeptide is Citrate synthase, mitochondrial (cs) (Xiphias gladius (Swordfish)).